The following is a 260-amino-acid chain: Emerin (260 aa).

Position 1 is an N-acetylmethionine (Met-1). Positions 1 to 45 (MDDYAVLSDTELAAVLRQYNIPHGPILGSTRKLYEKKIFEYETQR) constitute an LEM domain. Phosphoserine occurs at positions 8 and 29. Residues 46–224 (RRLSPPSSSS…PTAALGQDRQ (179 aa)) form an interaction with F-actin region. Ser-49 carries the phosphoserine; by PKA modification. Phosphoserine occurs at positions 54, 69, 72, 88, 99, 142, 143, and 144. At Tyr-162 the chain carries Phosphotyrosine. Residues 169-188 (RPISNVSRSSLGLSYYPRSS) form an interaction with CTNNB1 region. Phosphoserine occurs at positions 172, 175, and 177. The tract at residues 184 to 206 (YPRSSTSSVSSSSSSPSSWLTRR) is disordered. Low complexity predominate over residues 187–201 (SSTSSVSSSSSSPSS). The helical transmembrane segment at 225–245 (VPLWGQLLLFLAFATFLLFVY) threads the bilayer.

In terms of assembly, interacts with lamins A and C, BANF1, GMCL, BCLAF1 and YTHDC1/YT521. Interacts with TMEM43; the interaction retains emerin in the inner nuclear membrane. Interacts with ACTB, SPTAN1, F-actin, CTNNB1 and beta-tubulin. Interacts with SUN1 and SUN2. Interacts with TMEM201. Interacts with NEMP1.

Its subcellular location is the nucleus inner membrane. It localises to the nucleus outer membrane. Its function is as follows. Stabilizes and promotes the formation of a nuclear actin cortical network. Stimulates actin polymerization in vitro by binding and stabilizing the pointed end of growing filaments. Inhibits beta-catenin activity by preventing its accumulation in the nucleus. Acts by influencing the nuclear accumulation of beta-catenin through a CRM1-dependent export pathway. Links centrosomes to the nuclear envelope via a microtubule association. Required for proper localization of non-farnesylated prelamin-A/C. Together with NEMP1, contributes to nuclear envelope stiffness in germ cells. The protein is Emerin (Emd) of Rattus norvegicus (Rat).